The chain runs to 211 residues: Formate dehydrogenase, cytochrome b556(fdo) subunit (211 aa).

The Cytoplasmic portion of the chain corresponds to 1 to 17; sequence MKRRDTIVRYTAPERIN. A heme b-binding site is contributed by H18. Residues 18–32 form a helical membrane-spanning segment; it reads HWITAFCFILAAVSG. Residues 33–53 lie on the Periplasmic side of the membrane; sequence LGFLFPSFNWLMQIMGTPQLA. A helical membrane pass occupies residues 54-72; that stretch reads RILHPFVGVVMFASFIIMF. H57 contributes to the heme b binding site. The Cytoplasmic portion of the chain corresponds to 73 to 112; it reads FRYWHHNLINRDDIFWAKNIRKIVVNEEVGDTGRYNFGQK. A helical transmembrane segment spans residues 113–130; that stretch reads CVFWAAIIFLVLLLVSGV. Over 131–151 the chain is Periplasmic; sequence IIWRPYFAPAFSIPVIRFALM. A helical transmembrane segment spans residues 152–170; sequence LHSFAAVALIVVIMVHIYA. Residues H153 and H167 each coordinate heme b. Over 171–211 the chain is Cytoplasmic; it reads ALWVKGTITAMVEGWVTSAWAKKHHPRWYREVRKTTEKKAE.

Belongs to the formate dehydrogenase gamma subunit family. As to quaternary structure, formate dehydrogenase is a membrane-bound complex, formed by subunits alpha, beta and gamma. Heme serves as cofactor.

Its subcellular location is the cell inner membrane. Allows to use formate as major electron donor during aerobic respiration. Subunit gamma is probably the cytochrome b556(FDO) component of the formate dehydrogenase. The sequence is that of Formate dehydrogenase, cytochrome b556(fdo) subunit (fdoI) from Escherichia coli O157:H7.